The following is a 376-amino-acid chain: E3 ubiquitin-protein ligase RNF34 (376 aa).

The FYVE-type zinc-finger motif lies at 56–107 (EGPNIVCKACGLSFSVFRKKHVCCDCKKDFCSLCSVSQENLRRCSTCHLLQE). The SAP 1 domain occupies 115 to 134 (LMRLKVKDLRQYLLLRNIPT). Serine 169 carries the post-translational modification Phosphoserine. The disordered stretch occupies residues 216–256 (IASANTDDDDDDDDDDDDDEDDDDEQEEEEQNPGLSKKKAR). Acidic residues predominate over residues 221-246 (TDDDDDDDDDDDDDEDDDDEQEEEEQ). Serine 258 and serine 260 each carry phosphoserine. The SAP 2 domain maps to 268–282 (VEGMSVRQLKEILAR). The segment at 329-364 (CRICMDAVIDCVLLECGHMVTCTKCGKRMSECPICR) adopts an RING-type zinc-finger fold.

In terms of assembly, interacts with CASP8 and CASP10. Interacts with p53/TP53; involved in p53/TP53 ubiquitination. Interacts (via RING-type zinc finger) with MDM2; the interaction stabilizes MDM2. Interacts (via RING-type zinc finger) with PPARGC1A. Interacts with NOD1. Post-translationally, autoubiquitinated (in vitro). Proteolytically cleaved by caspases upon induction of apoptosis by TNF.

Its subcellular location is the cell membrane. The protein resides in the endomembrane system. The protein localises to the nucleus. It is found in the nucleus speckle. It localises to the cytoplasm. Its subcellular location is the cytosol. The catalysed reaction is S-ubiquitinyl-[E2 ubiquitin-conjugating enzyme]-L-cysteine + [acceptor protein]-L-lysine = [E2 ubiquitin-conjugating enzyme]-L-cysteine + N(6)-ubiquitinyl-[acceptor protein]-L-lysine.. It functions in the pathway protein modification; protein ubiquitination. Its function is as follows. E3 ubiquitin-protein ligase that regulates several biological processes through the ubiquitin-mediated proteasomal degradation of various target proteins. Ubiquitinates the caspases CASP8 and CASP10, promoting their proteasomal degradation, to negatively regulate cell death downstream of death domain receptors in the extrinsic pathway of apoptosis. May mediate 'Lys-48'-linked polyubiquitination of RIPK1 and its subsequent proteasomal degradation thereby indirectly regulating the tumor necrosis factor-mediated signaling pathway. Negatively regulates p53/TP53 through its direct ubiquitination and targeting to proteasomal degradation. Indirectly, may also negatively regulate p53/TP53 through ubiquitination and degradation of SFN. Mediates PPARGC1A proteasomal degradation probably through ubiquitination thereby indirectly regulating the metabolism of brown fat cells. Possibly involved in innate immunity, through 'Lys-48'-linked polyubiquitination of NOD1 and its subsequent proteasomal degradation. The sequence is that of E3 ubiquitin-protein ligase RNF34 from Mus musculus (Mouse).